We begin with the raw amino-acid sequence, 116 residues long: MAEEAQVIACHTVQEWNEKFQKAKDSGKLIVIDFTASWCGPCRVITPYVSELAKKFPHVAFFKVDVDDLKDVAEEYKVEAMPSFVILKEGQEVERIVGARKDELLHKIAVHAPITA.

The 114-residue stretch at 2 to 115 (AEEAQVIACH…HKIAVHAPIT (114 aa)) folds into the Thioredoxin domain. Catalysis depends on nucleophile residues Cys-39 and Cys-42. Cysteines 39 and 42 form a disulfide.

The protein belongs to the thioredoxin family. Plant H-type subfamily.

The protein resides in the cytoplasm. Functionally, participates in various redox reactions through the reversible oxidation of the active center dithiol to a disulfide. The H form is known to activate a number of cytosolic enzymes. This is Thioredoxin H-type from Fagopyrum esculentum (Common buckwheat).